Consider the following 930-residue polypeptide: Isoleucine--tRNA ligase (930 aa).

The short motif at 57-67 (PYANGNIHVGH) is the 'HIGH' region element. Glutamate 554 provides a ligand contact to L-isoleucyl-5'-AMP. The 'KMSKS' region signature appears at 595–599 (KMSKS). Residue lysine 598 coordinates ATP. Positions 888, 891, 908, and 911 each coordinate Zn(2+).

The protein belongs to the class-I aminoacyl-tRNA synthetase family. IleS type 1 subfamily. Monomer. Zn(2+) is required as a cofactor.

Its subcellular location is the cytoplasm. The catalysed reaction is tRNA(Ile) + L-isoleucine + ATP = L-isoleucyl-tRNA(Ile) + AMP + diphosphate. In terms of biological role, catalyzes the attachment of isoleucine to tRNA(Ile). As IleRS can inadvertently accommodate and process structurally similar amino acids such as valine, to avoid such errors it has two additional distinct tRNA(Ile)-dependent editing activities. One activity is designated as 'pretransfer' editing and involves the hydrolysis of activated Val-AMP. The other activity is designated 'posttransfer' editing and involves deacylation of mischarged Val-tRNA(Ile). This Streptococcus pneumoniae (strain Hungary19A-6) protein is Isoleucine--tRNA ligase.